Reading from the N-terminus, the 444-residue chain is Tol-Pal system protein TolB (444 aa).

The N-terminal stretch at 1 to 31 is a signal peptide; it reads MSFDLNRRQLMISAATAAGALALGPARDAFG.

It belongs to the TolB family. As to quaternary structure, the Tol-Pal system is composed of five core proteins: the inner membrane proteins TolA, TolQ and TolR, the periplasmic protein TolB and the outer membrane protein Pal. They form a network linking the inner and outer membranes and the peptidoglycan layer.

It localises to the periplasm. Part of the Tol-Pal system, which plays a role in outer membrane invagination during cell division and is important for maintaining outer membrane integrity. This Rhodopseudomonas palustris (strain ATCC BAA-98 / CGA009) protein is Tol-Pal system protein TolB.